The chain runs to 1279 residues: Photoreceptor cilium actin regulator (1279 aa).

Gly2 is lipidated: N-myristoyl glycine. Cys3 is lipidated: S-palmitoyl cysteine. Disordered regions lie at residues 101 to 168 (NKPQ…KGRV), 380 to 598 (AAQV…SHVE), 802 to 821 (EVSE…ENLP), 860 to 1107 (ASHP…TTAK), and 1127 to 1279 (KSSS…KEIS). Positions 126–168 (FSGKESKENTPQETSKGNRESVCHQPDSQDHCRQSATESKGRV) are enriched in basic and acidic residues. Acidic residues predominate over residues 477-491 (SEEEDCSPEEEDELS). 2 stretches are compositionally biased toward basic and acidic residues: residues 535–547 (LKMK…RIKF) and 580–598 (GPER…SHVE). Positions 804–818 (SESEDISGDVEEDLE) are enriched in acidic residues. Polar residues-rich tracts occupy residues 886–901 (GSGS…SGST), 913–925 (DLNS…PSSE), and 955–965 (TNPTPGQSRTL). The segment covering 972 to 990 (FSRDPHSSEASRKGPERSL) has biased composition (basic and acidic residues). Polar residues predominate over residues 1047–1062 (RKTTSPPCQHPQSNPA). Residues 1076–1090 (PSSASCSSPSVSPSR) are compositionally biased toward low complexity. Residues 1091–1100 (GSKDSIHSED) show a composition bias toward basic and acidic residues. Polar residues predominate over residues 1226-1241 (WNNSRVPELQGSSTKR). Over residues 1259–1279 (RMNRGQDRPQPESQPQHKEIS) the composition is skewed to basic and acidic residues.

As to expression, specifically expressed in retina.

Its subcellular location is the cell projection. It is found in the cilium. The protein resides in the photoreceptor outer segment. It localises to the photoreceptor inner segment. In terms of biological role, plays an essential role for normal photoreceptor cell maintenance and vision. The chain is Photoreceptor cilium actin regulator from Mus musculus (Mouse).